Consider the following 915-residue polypeptide: Coronin-7 (915 aa).

WD repeat units lie at residues 75–115 (CHSD…QALP), 124–163 (PEDA…PLTE), 166–205 (THGD…EAAQ), and 209–253 (AHEN…AALT). Positions 396 to 456 (TSCLAPPAEL…TSPSQRSLQS (61 aa)) are disordered. Low complexity-rich tracts occupy residues 399-413 (LAPP…AQPA) and 420-450 (SSTP…TSPS). Phosphoserine is present on residues serine 453 and serine 456. Lysine 463 participates in a covalent cross-link: Glycyl lysine isopeptide (Lys-Gly) (interchain with G-Cter in ubiquitin). WD repeat units lie at residues 533-573 (QNGV…LQEV), 583-623 (GHTE…EQLR), 626-665 (GHRD…EPLQ), and 719-759 (DVAP…PFFL). The segment at 850–915 (PPGMTPVSQA…FEGVDEDEWD (66 aa)) is disordered. A compositionally biased stretch (low complexity) spans 859–869 (APREAPARRAP). Over residues 874-886 (LEEKSDQQKKEEL) the composition is skewed to basic and acidic residues. Serine 905 carries the post-translational modification Phosphoserine.

This sequence belongs to the WD repeat coronin family. Interacts with clathrin adapter AP1 complex. This interaction takes place at Golgi membranes and not AP1-positive endosomal membranes. Interacts (when ubiquitinated at Lys-463) with EPS15. The membrane-associated form is phosphorylated on tyrosine residues. In terms of processing, ubiquitinated via 'Lys-33'-linked ubiquitin chains by the BCR(KLHL20) E3 ubiquitin ligase complex: 'Lys-33'-linked ubiquitination promotes interaction with EPS15 and facilitates actin polymerization at the trans-Golgi network, thereby facilitating post-Golgi trafficking. Deubiquitinated by ZRANB1/TRABID.

The protein localises to the golgi apparatus membrane. It localises to the golgi apparatus. It is found in the trans-Golgi network. The protein resides in the cytoplasmic vesicle. Its subcellular location is the cytoplasm. The protein localises to the cytosol. In terms of biological role, F-actin regulator involved in anterograde Golgi to endosome transport: upon ubiquitination via 'Lys-33'-linked ubiquitin chains by the BCR(KLHL20) E3 ubiquitin ligase complex, interacts with EPS15 and localizes to the trans-Golgi network, where it promotes actin polymerization, thereby facilitating post-Golgi trafficking. May play a role in the maintenance of the Golgi apparatus morphology. The chain is Coronin-7 (CORO7) from Bos taurus (Bovine).